The primary structure comprises 367 residues: 2-aminoethylphosphonate--pyruvate transaminase (367 aa).

Lys-193 is modified (N6-(pyridoxal phosphate)lysine).

Belongs to the class-V pyridoxal-phosphate-dependent aminotransferase family. PhnW subfamily. As to quaternary structure, homodimer. It depends on pyridoxal 5'-phosphate as a cofactor.

The catalysed reaction is (2-aminoethyl)phosphonate + pyruvate = phosphonoacetaldehyde + L-alanine. In terms of biological role, involved in phosphonate degradation. The protein is 2-aminoethylphosphonate--pyruvate transaminase of Vibrio vulnificus (strain CMCP6).